The sequence spans 295 residues: MTDYKEIATPSRTKEILKKHGFSFKKSLGQNFLTEPNILRKIVETAGINQQTNVVEVGPGIGALTEQLAMNAAQVVAFEIDDRLIPVLADTLSRYDNVTVVHQDVLKADLVETTNQVFQEKYPIKVVANLPYYITTPIMMHFLESSLDVAEMVVMMQKEVADRIAAKPGTKAYGSLSIAVQYFMEASVAFIVPKTVFVPQPNVDSAIIKLTRRATPAVTVTNEKEFFKLTKASFQLRRKTLWNNLTHFYGKDEQTVAWLKESLAEAEIDPSRRGETLSLEEFARLSNALEKNKPV.

Residues Asn31, Leu33, Gly58, Glu79, Asp104, and Asn129 each contribute to the S-adenosyl-L-methionine site.

The protein belongs to the class I-like SAM-binding methyltransferase superfamily. rRNA adenine N(6)-methyltransferase family. RsmA subfamily.

The protein resides in the cytoplasm. It catalyses the reaction adenosine(1518)/adenosine(1519) in 16S rRNA + 4 S-adenosyl-L-methionine = N(6)-dimethyladenosine(1518)/N(6)-dimethyladenosine(1519) in 16S rRNA + 4 S-adenosyl-L-homocysteine + 4 H(+). In terms of biological role, specifically dimethylates two adjacent adenosines (A1518 and A1519) in the loop of a conserved hairpin near the 3'-end of 16S rRNA in the 30S particle. May play a critical role in biogenesis of 30S subunits. This chain is Ribosomal RNA small subunit methyltransferase A, found in Enterococcus faecalis (strain ATCC 700802 / V583).